Reading from the N-terminus, the 137-residue chain is Major seminal plasma glycoprotein PSP-II (137 aa).

A signal peptide spans 1-21; the sequence is MKLGTAIPWALLLSTATLVST. 2 disulfide bridges follow: C30/C51 and C74/C95. Residues 30 to 131 enclose the CUB domain; the sequence is CGRVIKDTSG…SPFLIYFYGS (102 aa). N119 carries an N-linked (GlcNAc...) (complex) asparagine glycan.

As to quaternary structure, monomer or heterodimer with PSP-I (depending on the type of glycosylation of PSP-I). Seminal plasma or sperm.

It localises to the secreted. The polypeptide is Major seminal plasma glycoprotein PSP-II (Sus scrofa (Pig)).